Reading from the N-terminus, the 1018-residue chain is Ubiquitin carboxyl-terminal hydrolase 35 (1018 aa).

Residues I441 to R926 form the USP domain. C450 serves as the catalytic Nucleophile. 2 disordered regions span residues Q544 to V566 and R610 to G757. Residues P552 to P561 are compositionally biased toward pro residues. Position 613 is a phosphoserine (S613). Composition is skewed to basic and acidic residues over residues Q673 to E691, S699 to E709, and K718 to E728. The Proton acceptor role is filled by H862. Positions H984 to G1011 are disordered. Gly residues predominate over residues S999–G1011.

The protein belongs to the peptidase C19 family. Homodimer (via C-terminal region). Interacts with HSP90AA1. Post-translationally, ubiquitinated by CHIP/STUB1 in an HSP90-dependent manner; leading to proteasomal degradation. This ubiquitination can be reversed through auto-deubiquitinating activity. Expressed in testis, pancreas and skeletal muscle.

Its subcellular location is the cytoplasm. The protein resides in the mitochondrion. It carries out the reaction Thiol-dependent hydrolysis of ester, thioester, amide, peptide and isopeptide bonds formed by the C-terminal Gly of ubiquitin (a 76-residue protein attached to proteins as an intracellular targeting signal).. Functionally, deubiquitinase that plays a role in different processes including cell cycle regulation, mitophagy or endoplasmic reticulum stress. Inhibits TNFalpha-induced NF-kappa-B activation through stabilizing TNIP2 protein via deubiquitination. Plays an essential role during mitosis by deubiquitinating and thereby regulating the levels of Aurora B/AURKB protein. In addition, regulates the protein levels of other key component of the chromosomal passenger complex (CPC) such as survivin/BIRC5 or Borealin/CDCA8 by enhancing their stability. Regulates the degradation of mitochondria through the process of autophagy termed mitophagy. The polypeptide is Ubiquitin carboxyl-terminal hydrolase 35 (USP35) (Homo sapiens (Human)).